Consider the following 62-residue polypeptide: Potassium channel toxin alpha-KTx Tx308 (62 aa).

The first 18 residues, 1–18, serve as a signal peptide directing secretion; it reads MQKLFIVLLLFCILRLDA. Disulfide bonds link C28–C46, C33–C59, and C37–C61.

This sequence belongs to the short scorpion toxin superfamily. Potassium channel inhibitor family. Alpha-KTx 23 subfamily. In terms of tissue distribution, expressed by the venom gland.

It localises to the secreted. Its function is as follows. May block potassium channels. The chain is Potassium channel toxin alpha-KTx Tx308 from Buthus israelis (Israeli scorpion).